The following is a 1941-amino-acid chain: Myosin light chain kinase, smooth muscle (1941 aa).

Ig-like C2-type domains follow at residues 33–122 (PAFI…VELT) and 156–244 (PKFA…AELS). A disulfide bond links C177 and C228. Residue Y226 is modified to Phosphotyrosine; by ABL1. The disordered stretch occupies residues 255 to 329 (AVRGTKAPSP…RKVPQSSILQ (75 aa)). A compositionally biased stretch (polar residues) spans 286 to 305 (NCPSPQRSGSSARATNSHLK). The residue at position 295 (S295) is a Phosphoserine. The segment covering 306–320 (SPQEPKPKLCEDAPR) has biased composition (basic and acidic residues). Residues S333 and S355 each carry the phosphoserine modification. Ig-like C2-type domains follow at residues 402–485 (PRFE…GQVS), 502–587 (PSFS…ATVT), 611–699 (PIFL…AVLT), and 709–809 (PWFI…APPR). 2 disulfide bridges follow: C423–C475 and C523–C571. Y452 is subject to Phosphotyrosine; by ABL1 and SRC. C730 and C793 are oxidised to a cystine. Residue Y780 is modified to Phosphotyrosine; by ABL1. Repeat copies occupy residues 856–883 (DVRG…VGQL), 884–911 (DFRD…AEQM), 912–939 (DFRA…PQQV), and 940–966 (DFRS…AATP). Positions 856–985 (DVRGLLKRRV…KKSPSENGGN (130 aa)) are 5 X 28 AA approximate tandem repeats. Positions 911-951 (MDFRANLQRQVKPKTISEEERKVHSPQQVDFRSVLAKKGTP) are actin-binding (calcium/calmodulin-sensitive). Residues 920–1120 (QVKPKTISEE…KRPESQGSAP (201 aa)) form a disordered region. Position 935 is a phosphoserine (S935). Residues 936–951 (PQQVDFRSVLAKKGTP) are calmodulin-binding. A 1-5; truncated repeat occupies 967–985 (DFRSVLGGKKKSPSENGGN). 5 repeat units span residues 990–1002 (LNVK…TPAG), 1003–1014 (DAQAIGALKPVG), 1015–1026 (NAKPAETPKPIG), 1027–1038 (NAKPTETLKPVG), and 1039–1049 (NTKPAETLKPI). A 5 X 12 AA approximate tandem repeats region spans residues 990–1049 (LNVKAGESPTPAGDAQAIGALKPVGNAKPAETPKPIGNAKPTETLKPVGNTKPAETLKPI). Positions 1048-1482 (PIANAQPSGS…TVTVNTEQKV (435 aa)) are actin-binding (calcium/calmodulin-insensitive). Residues 1052–1065 (AQPSGSLKPVTNAQ) show a composition bias toward polar residues. Residues 1085–1099 (AGKEEVKEVKNDVNC) show a composition bias toward basic and acidic residues. In terms of domain architecture, Ig-like C2-type 7 spans 1120–1208 (PVFKEKLQDV…GQAECSCQVT (89 aa)). A disulfide bond links C1141 and C1192. The disordered stretch occupies residues 1212–1257 (AQTSENTKAPEMKSRRPKSSLPPVLGTESDATVKKKPAPKTPTKAA). Positions 1260-1348 (PQIIQFPEDQ…GSRQAQVNLT (89 aa)) constitute an Ig-like C2-type 8 domain. In terms of domain architecture, Fibronectin type-III spans 1356 to 1449 (PAGTPCASDI…ESELTAVGEK (94 aa)). The tract at residues 1435–1469 (SEPSQESELTAVGEKPEEPKDEVEVSDDDEKEPEV) is disordered. Residues 1453 to 1467 (PKDEVEVSDDDEKEP) show a composition bias toward acidic residues. S1460 bears the Phosphoserine mark. The residue at position 1471 (Y1471) is a Phosphotyrosine; by ABL1. Positions 1486 to 1741 (YDIEERLGSG…CTQCLQHPWL (256 aa)) constitute a Protein kinase domain. ATP contacts are provided by residues 1492-1500 (LGSGKFGQV) and K1515. Y1597 is subject to Phosphotyrosine; by ABL1. D1607 serves as the catalytic Proton acceptor. The residue at position 1657 (Y1657) is a Phosphotyrosine; by ABL1. The calmodulin-binding stretch occupies residues 1733-1796 (TQCLQHPWLM…SGLSGRKSST (64 aa)). Residues S1781, S1782, S1794, S1795, and S1798 each carry the phosphoserine modification. A disordered region spans residues 1789 to 1809 (LSGRKSSTGSPTSPINAEKLE). A compositionally biased stretch (polar residues) spans 1792-1803 (RKSSTGSPTSPI). Residue T1800 is modified to Phosphothreonine. Phosphoserine is present on S1801. One can recognise an Ig-like C2-type 9 domain in the interval 1831 to 1920 (PYFSKTIRDL…GEATCTAELI (90 aa)). The cysteines at positions 1852 and 1904 are disulfide-linked.

The protein belongs to the protein kinase superfamily. CAMK Ser/Thr protein kinase family. As to quaternary structure, all isoforms including Telokin bind calmodulin. Interacts with CTTN; this interaction is reduced during thrombin-induced endothelial cell (EC) contraction but is promoted by the barrier-protective agonist sphingosine 1-phosphate (S1P) within lamellipodia. A complex made of ABL1, CTTN and MYLK regulates cortical actin-based cytoskeletal rearrangement critical to sphingosine 1-phosphate (S1P)-mediated endothelial cell (EC) barrier enhancement. Binds to NAA10/ARD1. Interacts with SVIL and PTK2B/PYK2. It depends on Mg(2+) as a cofactor. Ca(2+) serves as cofactor. Post-translationally, can probably be down-regulated by phosphorylation. Tyrosine phosphorylation by ABL1 increases kinase activity, reverses MLCK-mediated inhibition of Arp2/3-mediated actin polymerization, and enhances CTTN-binding. Phosphorylation by SRC at Tyr-452 promotes CTTN binding. The C-terminus is deglutamylated by AGTPBP1/CCP1, AGBL1/CCP4 and AGBL4/CCP6, leading to the formation of Myosin light chain kinase, smooth muscle, deglutamylated form. The consequences of C-terminal deglutamylation are unknown. Smooth muscle isoform is expressed in all tissues with highest levels in bladder, uterus, vas deferens, colon, ileum, and tracheae. Isoform 1 is expressed in lung, bladder, and vas deferens. Telokin is expressed in smooth muscle cells of the gut, reproductive tract and urinary tract, including in uterus, vas deferens, bladder, colon, kidney, ureter and ovary. Telokin is also detected in the trachea.

It is found in the cytoplasm. It localises to the cell projection. Its subcellular location is the lamellipodium. The protein resides in the cleavage furrow. The protein localises to the cytoskeleton. It is found in the stress fiber. The enzyme catalyses L-seryl-[myosin light chain] + ATP = O-phospho-L-seryl-[myosin light chain] + ADP + H(+). The catalysed reaction is L-threonyl-[myosin light chain] + ATP = O-phospho-L-threonyl-[myosin light chain] + ADP + H(+). Calcium/calmodulin-dependent myosin light chain kinase implicated in smooth muscle contraction via phosphorylation of myosin light chains (MLC). Also regulates actin-myosin interaction through a non-kinase activity. Phosphorylates PTK2B/PYK2 and myosin light-chains. Involved in the inflammatory response (e.g. apoptosis, vascular permeability, leukocyte diapedesis), cell motility and morphology, airway hyperreactivity and other activities relevant to asthma. Required for tonic airway smooth muscle contraction that is necessary for physiological and asthmatic airway resistance. Necessary for gastrointestinal motility. Implicated in the regulation of endothelial as well as vascular permeability, probably via the regulation of cytoskeletal rearrangements. In the nervous system it has been shown to control the growth initiation of astrocytic processes in culture and to participate in transmitter release at synapses formed between cultured sympathetic ganglion cells. Critical participant in signaling sequences that result in fibroblast apoptosis. Plays a role in the regulation of epithelial cell survival. Required for epithelial wound healing, especially during actomyosin ring contraction during purse-string wound closure. Mediates RhoA-dependent membrane blebbing. Triggers TRPC5 channel activity in a calcium-dependent signaling, by inducing its subcellular localization at the plasma membrane. Promotes cell migration (including tumor cells) and tumor metastasis. PTK2B/PYK2 activation by phosphorylation mediates ITGB2 activation and is thus essential to trigger neutrophil transmigration during acute lung injury (ALI). May regulate optic nerve head astrocyte migration. Probably involved in mitotic cytoskeletal regulation. Regulates tight junction probably by modulating ZO-1 exchange in the perijunctional actomyosin ring. Mediates burn-induced microvascular barrier injury; triggers endothelial contraction in the development of microvascular hyperpermeability by phosphorylating MLC. Essential for intestinal barrier dysfunction. Mediates Giardia spp.-mediated reduced epithelial barrier function during giardiasis intestinal infection via reorganization of cytoskeletal F-actin and tight junctional ZO-1. Necessary for hypotonicity-induced Ca(2+) entry and subsequent activation of volume-sensitive organic osmolyte/anion channels (VSOAC) in cervical cancer cells. The sequence is that of Myosin light chain kinase, smooth muscle from Mus musculus (Mouse).